The sequence spans 401 residues: MIIMIPIYAITWNFRDTPEGFDKIVNNDYNYFESLCKKSSIDEFVILITCNRVEIYAYTRNEIDKDLFKDSLIYNYPESTMHLLRVASGLESMSIGENDIMRQVKEAYELSIKRKTSGKILSYIFKKALNVGKEVRTQTSISRGKTSIPAISLDICDNEYGINNKSILIIGNGKMATDFSRYLKEYRPGNVTIAGRSIDHARNLAVLYGYSYDSIKNLNNLIKNSDIIIAATSAGNYIVKDLGDLARNKYFIDISKPENIDPEISKYARLLSINEIGKILKRNEDEKKGEVEIAEVIINQEQKTIDEKLKEMMLDDVIAMFYKFANNVKKDELEELFLIQDFNDEQKKDIDAMTSSLINKILAPYTNSVKQFIKENKNFDYILNEYKKMLEQFMENIVKKL.

Substrate contacts are provided by residues 49-52 (TCNR), Ser92, 97-99 (END), and Gln103. Residue Cys50 is the Nucleophile of the active site. Residue 171 to 176 (GNGKMA) participates in NADP(+) binding.

The protein belongs to the glutamyl-tRNA reductase family. As to quaternary structure, homodimer.

It carries out the reaction (S)-4-amino-5-oxopentanoate + tRNA(Glu) + NADP(+) = L-glutamyl-tRNA(Glu) + NADPH + H(+). The protein operates within porphyrin-containing compound metabolism; protoporphyrin-IX biosynthesis; 5-aminolevulinate from L-glutamyl-tRNA(Glu): step 1/2. Catalyzes the NADPH-dependent reduction of glutamyl-tRNA(Glu) to glutamate 1-semialdehyde (GSA). The chain is Glutamyl-tRNA reductase from Picrophilus torridus (strain ATCC 700027 / DSM 9790 / JCM 10055 / NBRC 100828 / KAW 2/3).